Here is a 98-residue protein sequence, read N- to C-terminus: High mobility group nucleosome-binding domain-containing protein 3 (98 aa).

Composition is skewed to basic and acidic residues over residues 1-25, 39-52, 61-71, and 80-98; these read MPKRKSPEGAEGKDAAKVTKQEPTR, PEPKPRKTTKKEPG, GKKDEKQEAAK, and GENKAEEAQKTESVGDKNE. Residues 1–98 form a disordered region; that stretch reads MPKRKSPEGA…KTESVGDKNE (98 aa).

It belongs to the HMGN family.

The protein resides in the nucleus. This Gallus gallus (Chicken) protein is High mobility group nucleosome-binding domain-containing protein 3 (HMGN3).